We begin with the raw amino-acid sequence, 761 residues long: Semaphorin-3D (761 aa).

The signal sequence occupies residues 1-24 (MRASQVPNACSLLSLAMLFFPVTG). The Sema domain maps to 32–519 (RLKLSYKDLL…SRDGLVQLSL (488 aa)). Cys105 and Cys116 are joined by a disulfide. Asn127 carries N-linked (GlcNAc...) asparagine glycosylation. Intrachain disulfides connect Cys134–Cys143, Cys274–Cys386, Cys298–Cys346, and Cys522–Cys540. Residues 552–670 (PTSKRRARRQ…IHTIVKLNLN (119 aa)) enclose the Ig-like C2-type domain. Residue Asn595 is glycosylated (N-linked (GlcNAc...) asparagine). A disulfide bond links Cys653 and Cys719. Positions 728 to 754 (RRQRNKGGAKWKHVQEMKKKRNRRHHE) are enriched in basic residues. Residues 728–761 (RRQRNKGGAKWKHVQEMKKKRNRRHHEPARPPST) form a disordered region.

This sequence belongs to the semaphorin family. As to expression, developing spinal cord and developing visual system. Collapsin-1, -2, -3, and -5 bind to overlapping but distinct axon tracts.

The protein localises to the secreted. Its function is as follows. Induces the collapse and paralysis of neuronal growth cones. Could potentially act as repulsive cues toward specific neuronal populations. Binds to neuropilin. The chain is Semaphorin-3D (SEMA3D) from Gallus gallus (Chicken).